A 527-amino-acid chain; its full sequence is SusD-like protein P25 (527 aa).

A signal peptide spans 1–15 (MKIQNIIVYVFLIFS). Residue Cys-16 is the site of N-palmitoyl cysteine attachment. Cys-16 carries the S-diacylglycerol cysteine lipid modification.

The protein belongs to the SusD family.

It localises to the cell outer membrane. Its function is as follows. Polysaccharide-binding protein probably involved in ulvan degradation. Ulvan is the main polysaccharide component of the Ulvales (green seaweed) cell wall. It is composed of disaccharide building blocks comprising 3-sulfated rhamnose (Rha3S) linked to D-glucuronic acid (GlcA), L-iduronic acid (IduA), or D-xylose (Xyl). The SusD-like protein may mediate ulvan oligomer-binding before transport in the periplasm for further degradation. The chain is SusD-like protein P25 from Formosa agariphila (strain DSM 15362 / KCTC 12365 / LMG 23005 / KMM 3901 / M-2Alg 35-1).